The primary structure comprises 300 residues: F-box associated domain-containing protein sdz-33 (300 aa).

Positions 5–51 (PFPILCLPDFVLQKSLKLMGVVEHLCLSILSKNIKQLIATLKGYPKC) constitute an F-box domain.

As to expression, expressed in D-type motor neuron cell bodies.

Substrate recognition component of E3 ubiquitin-protein ligase complex which mediates the ubiquitination and subsequent proteasomal degradation of target proteins such as mdl-1. Positively regulates axon regeneration by targeting mdl-1 for ubiquitin-mediated degradation; probably thereby reducing levels of mdl-1-mxl-1 heterodimers, allowing free mxl-1 to form complexes with tdpt-1 and thus inhibiting tdpt-1-dependent sumoylation of ets-4. The sequence is that of F-box associated domain-containing protein sdz-33 from Caenorhabditis elegans.